The following is a 568-amino-acid chain: Lariat debranching enzyme (568 aa).

Cys8, His10, Asp39, and Asn84 together coordinate a divalent metal cation. Positions 124–154 are lariat recognition loop; sequence SGIFKSHDFKKGHFEFPPYNPETLRSVYHIR. Residues His174, His226, and His228 each contribute to the a divalent metal cation site. Residues 388–568 are disordered; that stretch reads IYGERGGKGA…TAVEDEESDS (181 aa). Residues 417–428 show a composition bias toward polar residues; the sequence is PSDTSGLSSSYN. Positions 432-444 are enriched in acidic residues; that stretch reads ITIEDEWEEEEDG. The span at 467-480 shows a compositional bias: basic and acidic residues; the sequence is DSDRDSSPQRETAK. A Phosphothreonine modification is found at Thr478. Low complexity predominate over residues 534–549; sequence GETTQSSAGQTGGTPQ. Ser568 bears the Phosphoserine mark.

Belongs to the lariat debranching enzyme family. The cofactor is Fe(2+). Zn(2+) is required as a cofactor. It depends on Mn(2+) as a cofactor.

It is found in the nucleus. With respect to regulation, active in presence of diverse metals including Fe(2+), Zn(2+), Mn(2+). Also activated by Ca(2+). Binds two metal cations in two adjacent alpha and beta metal-binding pockets. In terms of biological role, cleaves the 2'-5' phosphodiester linkage at the branch point of excised lariat intron RNA and converts them into linear molecules that can be subsequently degraded, thereby facilitating ribonucleotide turnover. Linked to its role in pre-mRNA processing mechanism, may also participate in retrovirus replication and have an antiviral cell-intrinsic defense function. This is Lariat debranching enzyme (dbr1) from Danio rerio (Zebrafish).